A 1371-amino-acid chain; its full sequence is DNA-directed RNA polymerase subunit beta'' (1371 aa).

4 residues coordinate Zn(2+): Cys220, Cys293, Cys300, and Cys303.

This sequence belongs to the RNA polymerase beta' chain family. RpoC2 subfamily. As to quaternary structure, in plastids the minimal PEP RNA polymerase catalytic core is composed of four subunits: alpha, beta, beta', and beta''. When a (nuclear-encoded) sigma factor is associated with the core the holoenzyme is formed, which can initiate transcription. The cofactor is Zn(2+).

It is found in the plastid. The protein localises to the chloroplast. The enzyme catalyses RNA(n) + a ribonucleoside 5'-triphosphate = RNA(n+1) + diphosphate. DNA-dependent RNA polymerase catalyzes the transcription of DNA into RNA using the four ribonucleoside triphosphates as substrates. The polypeptide is DNA-directed RNA polymerase subunit beta'' (Lobularia maritima (Sweet alyssum)).